An 882-amino-acid polypeptide reads, in one-letter code: Valine--tRNA ligase (882 aa).

The 'HIGH' region motif lies at 52–62 (PNVTGSLHMGH). The short motif at 539-543 (KMSKS) is the 'KMSKS' region element. Lys542 contributes to the ATP binding site. Residues 816–882 (IDVAAERRRL…RINARLAVLQ (67 aa)) are a coiled coil.

This sequence belongs to the class-I aminoacyl-tRNA synthetase family. ValS type 1 subfamily. In terms of assembly, monomer.

It localises to the cytoplasm. The catalysed reaction is tRNA(Val) + L-valine + ATP = L-valyl-tRNA(Val) + AMP + diphosphate. Functionally, catalyzes the attachment of valine to tRNA(Val). As ValRS can inadvertently accommodate and process structurally similar amino acids such as threonine, to avoid such errors, it has a 'posttransfer' editing activity that hydrolyzes mischarged Thr-tRNA(Val) in a tRNA-dependent manner. The protein is Valine--tRNA ligase of Mycolicibacterium paratuberculosis (strain ATCC BAA-968 / K-10) (Mycobacterium paratuberculosis).